The chain runs to 384 residues: S-adenosylmethionine synthase (384 aa).

Residue histidine 15 participates in ATP binding. Mg(2+) is bound at residue aspartate 17. Glutamate 43 lines the K(+) pocket. Glutamate 56 and glutamine 99 together coordinate L-methionine. Positions 99–109 (QSPDINQGVDR) are flexible loop. ATP-binding positions include 164 to 166 (DAK), 230 to 231 (RF), aspartate 239, 245 to 246 (RK), alanine 262, and lysine 266. Aspartate 239 contacts L-methionine. An L-methionine-binding site is contributed by lysine 270.

This sequence belongs to the AdoMet synthase family. As to quaternary structure, homotetramer; dimer of dimers. Mg(2+) serves as cofactor. The cofactor is K(+).

Its subcellular location is the cytoplasm. It carries out the reaction L-methionine + ATP + H2O = S-adenosyl-L-methionine + phosphate + diphosphate. It participates in amino-acid biosynthesis; S-adenosyl-L-methionine biosynthesis; S-adenosyl-L-methionine from L-methionine: step 1/1. Its function is as follows. Catalyzes the formation of S-adenosylmethionine (AdoMet) from methionine and ATP. The overall synthetic reaction is composed of two sequential steps, AdoMet formation and the subsequent tripolyphosphate hydrolysis which occurs prior to release of AdoMet from the enzyme. This Salmonella gallinarum (strain 287/91 / NCTC 13346) protein is S-adenosylmethionine synthase.